The primary structure comprises 362 residues: Carbamoyl phosphate synthase pyrimidine-specific small chain (362 aa).

Residues 1–168 (MKRQLILEDG…TRDPYHVPGP (168 aa)) form a CPSase region. Positions 45, 219, and 221 each coordinate L-glutamine. A Glutamine amidotransferase type-1 domain is found at 171-358 (RVVLVDYGMK…IKLMESNKHR (188 aa)). Residue cysteine 246 is the Nucleophile of the active site. Positions 247, 250, 288, 290, and 291 each coordinate L-glutamine. Active-site residues include histidine 331 and glutamate 333.

The protein belongs to the CarA family. As to quaternary structure, composed of two chains; the small (or glutamine) chain promotes the hydrolysis of glutamine to ammonia, which is used by the large (or ammonia) chain to synthesize carbamoyl phosphate. Tetramer of heterodimers (alpha,beta)4.

It carries out the reaction hydrogencarbonate + L-glutamine + 2 ATP + H2O = carbamoyl phosphate + L-glutamate + 2 ADP + phosphate + 2 H(+). It catalyses the reaction L-glutamine + H2O = L-glutamate + NH4(+). Its pathway is pyrimidine metabolism; UMP biosynthesis via de novo pathway; (S)-dihydroorotate from bicarbonate: step 1/3. Functionally, small subunit of the glutamine-dependent carbamoyl phosphate synthetase (CPSase). CPSase catalyzes the formation of carbamoyl phosphate from the ammonia moiety of glutamine, carbonate, and phosphate donated by ATP, constituting the first step of the biosynthetic pathway leading to pyrimidine nucleotides. The small subunit (glutamine amidotransferase) binds and cleaves glutamine to supply the large subunit with the substrate ammonia. The chain is Carbamoyl phosphate synthase pyrimidine-specific small chain from Halalkalibacterium halodurans (strain ATCC BAA-125 / DSM 18197 / FERM 7344 / JCM 9153 / C-125) (Bacillus halodurans).